The following is a 56-amino-acid chain: Large ribosomal subunit protein bL33 (56 aa).

It belongs to the bacterial ribosomal protein bL33 family.

In Treponema denticola (strain ATCC 35405 / DSM 14222 / CIP 103919 / JCM 8153 / KCTC 15104), this protein is Large ribosomal subunit protein bL33.